A 371-amino-acid polypeptide reads, in one-letter code: Probable cysteine protease RDL5 (371 aa).

The signal sequence occupies residues 1 to 23 (MGYAKSAMLIFLLALVIASCATA). Residues 24–143 (MDMSVVSSND…NRYKTSDGDV (120 aa)) constitute a propeptide, activation peptide. Residue N94 is glycosylated (N-linked (GlcNAc...) asparagine). 3 disulfide bridges follow: C165-C206, C199-C239, and C298-C349. C168 is an active-site residue. Active-site residues include H304 and N324.

This sequence belongs to the peptidase C1 family. Expressed in roots, inflorescences and siliques.

Functionally, possesses protease activity in vitro. In Arabidopsis thaliana (Mouse-ear cress), this protein is Probable cysteine protease RDL5.